The following is a 68-amino-acid chain: U-scoloptoxin(02)-Er1a (68 aa).

A signal peptide spans 1 to 20 (MIVSLRCCLLLVALLITVET). Intrachain disulfides connect C30-C52, C38-C58, and C42-C60.

Belongs to the invertebrate defensin family. As to expression, expressed by the venom gland.

The protein localises to the secreted. Its function is as follows. Antibacterial peptide mostly active against Gram-positive bacteria. The protein is U-scoloptoxin(02)-Er1a of Ethmostigmus rubripes (Giant centipede).